Consider the following 192-residue polypeptide: T-cell surface glycoprotein CD3 epsilon chain (192 aa).

An N-terminal signal peptide occupies residues 1–21 (MQSGNLWRALGLCLLLVGAWA). The Extracellular segment spans residues 23–114 (DADEQKPYEV…QNCMEVNLME (92 aa)). The Ig-like domain occupies 26–97 (EQKPYEVSIS…EGNKEAAHTL (72 aa)). Cys-43 and Cys-84 are joined by a disulfide. Asn-72 carries N-linked (GlcNAc...) asparagine glycosylation. The helical transmembrane segment at 115-135 (VATIIVVDICVTLGLLLLVYY) threads the bilayer. The Cytoplasmic segment spans residues 136–192 (WSKSRKAKASPMTRGAGAGGRPRGQNKGRPPPVPNPDYEPIRKGQRDLYAGLNQRGV). A disordered region spans residues 145-180 (SPMTRGAGAGGRPRGQNKGRPPPVPNPDYEPIRKGQ). Residues 160 to 177 (QNKGRPPPVPNPDYEPIR) are NUMB-binding region. In terms of domain architecture, ITAM spans 163–190 (GRPPPVPNPDYEPIRKGQRDLYAGLNQR). The segment at 164–171 (RPPPVPNP) is proline-rich sequence. A phosphotyrosine mark is found at Tyr-173 and Tyr-184.

In terms of assembly, the TCR-CD3 complex is composed of a CD3D/CD3E and a CD3G/CD3E heterodimers that preferentially associate with TCRalpha and TCRbeta, respectively, to form TCRalpha/CD3E/CD3G and TCRbeta/CD3G/CD3E trimers. In turn, the hexamer interacts with CD3Z homodimer to form the TCR-CD3 complex. Alternatively, TCRalpha and TCRbeta can be replaced by TCRgamma and TCRdelta. Interacts with CD6. Interacts (via Proline-rich sequence) with NCK1; the interaction is ligand dependent but independent of tyrosine kinase activation. Phosphorylated on Tyr residues after T-cell receptor triggering by LCK in association with CD4/CD8.

It is found in the cell membrane. Part of the TCR-CD3 complex present on T-lymphocyte cell surface that plays an essential role in adaptive immune response. When antigen presenting cells (APCs) activate T-cell receptor (TCR), TCR-mediated signals are transmitted across the cell membrane by the CD3 chains CD3D, CD3E, CD3G and CD3Z. All CD3 chains contain immunoreceptor tyrosine-based activation motifs (ITAMs) in their cytoplasmic domain. Upon TCR engagement, these motifs become phosphorylated by Src family protein tyrosine kinases LCK and FYN, resulting in the activation of downstream signaling pathways. In addition of this role of signal transduction in T-cell activation, CD3E plays an essential role in correct T-cell development. Also participates in internalization and cell surface down-regulation of TCR-CD3 complexes via endocytosis sequences present in CD3E cytosolic region. In addition to its role as a TCR coreceptor, it serves as a receptor for ITPRIPL1. Ligand recognition inhibits T-cell activation by promoting interaction with NCK1, which prevents CD3E-ZAP70 interaction and blocks the ERK-NFkB signaling cascade and calcium influx. In Bos taurus (Bovine), this protein is T-cell surface glycoprotein CD3 epsilon chain (CD3E).